The chain runs to 183 residues: Ribosome-recycling factor (183 aa).

This sequence belongs to the RRF family.

Its subcellular location is the cytoplasm. Functionally, responsible for the release of ribosomes from messenger RNA at the termination of protein biosynthesis. May increase the efficiency of translation by recycling ribosomes from one round of translation to another. The sequence is that of Ribosome-recycling factor from Deinococcus deserti (strain DSM 17065 / CIP 109153 / LMG 22923 / VCD115).